A 574-amino-acid chain; its full sequence is Kelch-like protein 35 (574 aa).

Positions 40–110 constitute a BTB domain; that stretch reads TDVVLRAGGR…VYGAGVRLRA (71 aa). The 103-residue stretch at 146–248 folds into the BACK domain; sequence SLALRRVAAA…APAYFLEKVE (103 aa). Kelch repeat units follow at residues 292-341, 343-385, 386-432, 434-480, 481-522, and 524-570; these read VIVV…ALRN, IYVS…ALQG, QLFA…PCAG, LYVI…SLED, TIYV…VCDG, and VHIL…TIVQ.

This is Kelch-like protein 35 (Klhl35) from Mus musculus (Mouse).